Consider the following 206-residue polypeptide: Small ribosomal subunit protein uS4 (206 aa).

The disordered stretch occupies residues Tyr28–Ser48. The S4 RNA-binding domain occupies Met95–Gly160.

Belongs to the universal ribosomal protein uS4 family. As to quaternary structure, part of the 30S ribosomal subunit. Contacts protein S5. The interaction surface between S4 and S5 is involved in control of translational fidelity.

One of the primary rRNA binding proteins, it binds directly to 16S rRNA where it nucleates assembly of the body of the 30S subunit. Its function is as follows. With S5 and S12 plays an important role in translational accuracy. The chain is Small ribosomal subunit protein uS4 from Paenarthrobacter aurescens (strain TC1).